We begin with the raw amino-acid sequence, 59 residues long: Cuticle protein 16 isoform D (59 aa).

The protein is Cuticle protein 16 isoform D of Limulus polyphemus (Atlantic horseshoe crab).